Here is a 454-residue protein sequence, read N- to C-terminus: Cell division cycle-associated 7-like protein (454 aa).

An Integrase domain-binding motif 1 (IBM1) motif is present at residues 9–33 (IPKEVADIFNAPSDDEEFVGFRDDV). The residue at position 21 (Ser-21) is a Phosphoserine. Residues 65–91 (FTEELRRIFIEDTDSETEDFAGFTQSD) carry the Integrase domain-binding motif 2 (IBM2) motif. Thr-77 bears the Phosphothreonine mark. Position 79 is a phosphoserine (Ser-79). A phosphothreonine mark is found at Thr-81 and Thr-88. 2 disordered regions span residues 103–169 (VESD…LFSS) and 188–213 (QVIQREDSTSESEDDSRDESQESSDA). Phosphoserine occurs at positions 105, 108, 117, 138, 139, 162, 195, and 197. Residues 117–126 (SEEEEDEEED) are compositionally biased toward acidic residues. The interval 213–235 (ALLKRTMNIKENKAMLAQLLAEL) is MYC-binding. Glycyl lysine isopeptide (Lys-Gly) (interchain with G-Cter in SUMO2) cross-links involve residues Lys-222 and Lys-225. Residue Ser-261 is modified to Phosphoserine.

In terms of assembly, interacts with MYC. Interacts (via IBM motifs) with PSIP1 (via IBD domain); phosphorylation increases its affinity for PSIP1. In terms of processing, phosphorylation increases its interaction with PSIP1. As to expression, ubiquitous. Overexpressed in medulloblastoma.

The protein localises to the cytoplasm. It is found in the nucleus. Functionally, plays a role in transcriptional regulation as a repressor that inhibits monoamine oxidase A (MAOA) activity and gene expression by binding to the promoter. Plays an important oncogenic role in mediating the full transforming effect of MYC in medulloblastoma cells. Involved in apoptotic signaling pathways; May act downstream of P38-kinase and BCL-2, but upstream of CASP3/caspase-3 as well as CCND1/cyclin D1 and E2F1. The polypeptide is Cell division cycle-associated 7-like protein (CDCA7L) (Homo sapiens (Human)).